Reading from the N-terminus, the 1053-residue chain is CRISPR-associated endonuclease Cas9 (1053 aa).

The ruvC-I stretch occupies residues 1 to 41; sequence MKRNYILGLDIGITSVGYGIIDYETRDVIDAGVRLFKEANV. Catalysis depends on Asp10, which acts as the For RuvC-like nuclease domain. Asp10 serves as a coordination point for Mg(2+). Residues 41-426 form a recognition lobe region; sequence VENNEGRRSK…IFNRLKLVPK (386 aa). Residues 435 to 481 form a ruvC-II region; the sequence is EIPTTLVDDFILSPVVKRSFIQSIKVINAIIKKYGLPNDIIIELARE. Glu477 and Glu481 together coordinate Mg(2+). Residues 480-646 form the HNH Cas9-type domain; sequence REKNSKDAQK…VQKDFINRNL (167 aa). His557 acts as the Proton acceptor for HNH nuclease domain in catalysis. Residues 650–775 are ruvC-III; it reads RYATRGLMNL…FKDYKYSHRV (126 aa). His701 contributes to the Mg(2+) binding site. Position 789 (Tyr789) interacts with RNA. PAM substrate-binding regions lie at residues 882–889 and 985–993; these read YYGNKLNA and NNDLLNRIE. The segment at 910-1053 is PAM-interacting domain (PI); that stretch reads KPYRFDVYLD…KKHPQIIKKG (144 aa).

It belongs to the CRISPR-associated Cas9 family. Subtype II-A subfamily. As to quaternary structure, monomer. Binds crRNA and tracrRNA. Requires Mg(2+) as cofactor.

Functionally, CRISPR (clustered regularly interspaced short palindromic repeat) is an adaptive immune system that provides protection against mobile genetic elements (viruses, transposable elements and conjugative plasmids). CRISPR clusters contain spacers, sequences complementary to antecedent mobile elements, and target invading nucleic acids. CRISPR clusters are transcribed and processed into CRISPR RNA (crRNA). In type II CRISPR systems correct processing of pre-crRNA requires a trans-encoded small RNA (tracrRNA), endogenous ribonuclease 3 (rnc) and this protein. The tracrRNA serves as a guide for ribonuclease 3-aided processing of pre-crRNA. Subsequently Cas9/crRNA/tracrRNA endonucleolytically cleaves linear or circular dsDNA target complementary to the spacer; Cas9 is inactive in the absence of the 2 guide RNAs (gRNA). Cas9 recognizes the protospacer adjacent motif (PAM) in the CRISPR repeat sequences to help distinguish self versus nonself, as targets within the bacterial CRISPR locus do not have PAMs. PAM recognition is also required for catalytic activity. The polypeptide is CRISPR-associated endonuclease Cas9 (Staphylococcus aureus).